Here is a 343-residue protein sequence, read N- to C-terminus: Ribosomal RNA small subunit methyltransferase C (343 aa).

Belongs to the methyltransferase superfamily. RsmC family. As to quaternary structure, monomer.

It is found in the cytoplasm. The catalysed reaction is guanosine(1207) in 16S rRNA + S-adenosyl-L-methionine = N(2)-methylguanosine(1207) in 16S rRNA + S-adenosyl-L-homocysteine + H(+). In terms of biological role, specifically methylates the guanine in position 1207 of 16S rRNA in the 30S particle. This chain is Ribosomal RNA small subunit methyltransferase C, found in Shigella boydii serotype 4 (strain Sb227).